We begin with the raw amino-acid sequence, 693 residues long: MSALQIQNVNWQVPMNRRAHHTDKFSSQDSIVRRGQPWEIILVCNRSLESGEDLNFIVSTGPQPSESARTKAVFSISGRSTGGWNAALKANSGNNLAIAIASPVSAPIGLYTLSVEISSRGRASSLKLGTFIMLFNPWLQADDVFMSNHAERQEYVEEDSGIIYVGSTNRIGMVGWNFGQFEEDILNISLSILDRSLNFRRDPVTDVARRNDPKYVCRVLSAMINGNDDNGVISGNWSGNYTGGVDPRTWNGSVEILKNWKKSGFRPVQFGQCWVFAGTLNTVLRCLGVPSRVITNFNSAHDTDRNLSVDVYYDAMGNPLEKGSDSVWNFHVWNEGWFVRTDLGPTYNGWQVLDATPQERSQGVFQCGPASVNAIKAGDVDRNFDMIFIFAEVNADRITWIYNNRNNTQKQNSVDTHSIGKYISTKAVGSNSRMDVTDKYKYPEGSSEERQVHQKALDKLKPNASFGATSSRNPEGEDKEPSISGKFKVTGILAVGKEVSLSLMLKNMTNDRKTVTMNMTAWTIVYNGTLVHEVWKDSATISLDPEEEIQYPVKIAYSQYERYLKADNMIRITAVCKVPDEAEVVVERDVILDNPALTLEVLEQAHVRKPVNVQMLFSNPLDQPVNNCVLLVEGSGLLRGSLKIDVPSLRPKEKSRIRFEIFPTRSGTKQLLADFSCNKFPAIKAMLPIDVSE.

Residue Tyr-111 is modified to Phosphotyrosine. Thr-112 bears the Phosphothreonine mark. Ca(2+) is bound by residues Ala-222, Asn-225, Asn-227, Asp-228, and Asn-230. The active site involves Cys-273. 5 residues coordinate Ca(2+): Asp-302, Asp-304, Asn-306, Ser-308, and Asp-325. Catalysis depends on residues His-331 and Asp-354. Residues Asn-394, Thr-416, Glu-444, and Glu-449 each coordinate Ca(2+). The disordered stretch occupies residues 457–483 (LDKLKPNASFGATSSRNPEGEDKEPSI).

The protein belongs to the transglutaminase superfamily. Transglutaminase family. As to quaternary structure, consists of two polypeptide chains, which are synthesized as a precursor form of a single polypeptide. Requires Ca(2+) as cofactor. Post-translationally, activated by proteolytic processing. In vitro activation is commonly achieved by cleavage with dispase, a neutral bacterial protease. Physiological activation may be catalyzed by CTSL and, to a lesser extent, by CTSS. Expressed in skin and stomach and, at lower levels, in testis, kidney and spleen (at protein level). On the basis of its catalytic activity, detected in the epidermis, around the granular and spinous layers but not in the outermost cornified layers. In hair follicles, mainly located in the medulla and the hair cortex.

Its subcellular location is the cytoplasm. The enzyme catalyses L-glutaminyl-[protein] + L-lysyl-[protein] = [protein]-L-lysyl-N(6)-5-L-glutamyl-[protein] + NH4(+). In terms of biological role, catalyzes the calcium-dependent formation of isopeptide cross-links between glutamine and lysine residues in various proteins, as well as the conjugation of polyamines to proteins. Involved in the formation of the cornified envelope (CE), a specialized component consisting of covalent cross-links of proteins beneath the plasma membrane of terminally differentiated keratinocytes. Catalyzes small proline-rich proteins (SPRR1 and SPRR2) and LOR cross-linking to form small interchain oligomers, which are further cross-linked by TGM1 onto the growing CE scaffold. In hair follicles, involved in cross-linking structural proteins to hardening the inner root sheath. This is Protein-glutamine gamma-glutamyltransferase E (Tgm3) from Mus musculus (Mouse).